The following is a 176-amino-acid chain: MKFKRLLHSGIASLSLVACGVNAATDLGPAGDIHFSITITTKACEMEKSDLEVDMGTMTLQKPAAVGTVLSKKDFTIELKECDGISKATVEMDSQSDSDDDSMFALEAGGATGVALKIEDDKGTQQVPKGSSGTPIEWAIDGETTSLHYQASYVVVNTQATGGTANALVNFSITYE.

The N-terminal stretch at 1–23 (MKFKRLLHSGIASLSLVACGVNA) is a signal peptide.

This sequence belongs to the fimbrial protein family.

The protein localises to the fimbrium. Part of the lpfABCC'DE fimbrial operon. LP fimbriae may participate in the interaction with eukaryotic cells by assisting in microcolony formation. The polypeptide is Probable fimbrial subunit LpfE (lpfE) (Escherichia coli O157:H7).